A 114-amino-acid polypeptide reads, in one-letter code: Large ribosomal subunit protein uL22c (114 aa).

Belongs to the universal ribosomal protein uL22 family. Part of the 50S ribosomal subunit.

The protein localises to the plastid. It is found in the chloroplast. In terms of biological role, this protein binds specifically to 23S rRNA. The globular domain of the protein is located near the polypeptide exit tunnel on the outside of the subunit, while an extended beta-hairpin is found that lines the wall of the exit tunnel in the center of the 70S ribosome. The protein is Large ribosomal subunit protein uL22c (rpl22) of Gracilaria tenuistipitata var. liui (Red alga).